The sequence spans 368 residues: Spermidine/putrescine import ATP-binding protein PotA (368 aa).

An ABC transporter domain is found at 6 to 236 (VSIKNVSKFF…PVNVFAATFI (231 aa)). Residue 38-45 (GPSGCGKT) participates in ATP binding.

Belongs to the ABC transporter superfamily. Spermidine/putrescine importer (TC 3.A.1.11.1) family. The complex is composed of two ATP-binding proteins (PotA), two transmembrane proteins (PotB and PotC) and a solute-binding protein (PotD).

Its subcellular location is the cell inner membrane. The catalysed reaction is ATP + H2O + polyamine-[polyamine-binding protein]Side 1 = ADP + phosphate + polyamineSide 2 + [polyamine-binding protein]Side 1.. Part of the ABC transporter complex PotABCD involved in spermidine/putrescine import. Responsible for energy coupling to the transport system. The chain is Spermidine/putrescine import ATP-binding protein PotA from Thermotoga maritima (strain ATCC 43589 / DSM 3109 / JCM 10099 / NBRC 100826 / MSB8).